Here is a 313-residue protein sequence, read N- to C-terminus: Porphobilinogen deaminase (313 aa).

Cysteine 242 bears the S-(dipyrrolylmethanemethyl)cysteine mark.

The protein belongs to the HMBS family. In terms of assembly, monomer. Requires dipyrromethane as cofactor.

It catalyses the reaction 4 porphobilinogen + H2O = hydroxymethylbilane + 4 NH4(+). The protein operates within porphyrin-containing compound metabolism; protoporphyrin-IX biosynthesis; coproporphyrinogen-III from 5-aminolevulinate: step 2/4. In terms of biological role, tetrapolymerization of the monopyrrole PBG into the hydroxymethylbilane pre-uroporphyrinogen in several discrete steps. The chain is Porphobilinogen deaminase from Escherichia coli O7:K1 (strain IAI39 / ExPEC).